A 669-amino-acid chain; its full sequence is DNA ligase (669 aa).

Residues 32-36 (DAEYD), 81-82 (SL), and glutamate 111 contribute to the NAD(+) site. Catalysis depends on lysine 113, which acts as the N6-AMP-lysine intermediate. The NAD(+) site is built by arginine 134, glutamate 171, lysine 290, and lysine 314. Zn(2+) is bound by residues cysteine 408, cysteine 411, cysteine 426, and cysteine 432. The BRCT domain occupies 591 to 669 (EEALSLKGQT…EAELLAILGS (79 aa)).

It belongs to the NAD-dependent DNA ligase family. LigA subfamily. Mg(2+) serves as cofactor. Requires Mn(2+) as cofactor.

The enzyme catalyses NAD(+) + (deoxyribonucleotide)n-3'-hydroxyl + 5'-phospho-(deoxyribonucleotide)m = (deoxyribonucleotide)n+m + AMP + beta-nicotinamide D-nucleotide.. In terms of biological role, DNA ligase that catalyzes the formation of phosphodiester linkages between 5'-phosphoryl and 3'-hydroxyl groups in double-stranded DNA using NAD as a coenzyme and as the energy source for the reaction. It is essential for DNA replication and repair of damaged DNA. This chain is DNA ligase, found in Shewanella loihica (strain ATCC BAA-1088 / PV-4).